The chain runs to 679 residues: Methionine--tRNA ligase (679 aa).

Positions 15–25 (PYANGPIHLGH) match the 'HIGH' region motif. 4 residues coordinate Zn(2+): cysteine 146, cysteine 149, cysteine 159, and cysteine 162. The short motif at 332-336 (KMSKS) is the 'KMSKS' region element. An ATP-binding site is contributed by lysine 335. Residues 578 to 679 (DFAKIDLRIA…EGAQPGMKVK (102 aa)) enclose the tRNA-binding domain.

The protein belongs to the class-I aminoacyl-tRNA synthetase family. MetG type 1 subfamily. In terms of assembly, homodimer. Zn(2+) is required as a cofactor.

The protein localises to the cytoplasm. The enzyme catalyses tRNA(Met) + L-methionine + ATP = L-methionyl-tRNA(Met) + AMP + diphosphate. Its function is as follows. Is required not only for elongation of protein synthesis but also for the initiation of all mRNA translation through initiator tRNA(fMet) aminoacylation. This Shewanella halifaxensis (strain HAW-EB4) protein is Methionine--tRNA ligase.